Reading from the N-terminus, the 387-residue chain is Cysteine desulfurase IscS (387 aa).

Residues 73 to 74 (AT), asparagine 155, glutamine 183, and 203 to 205 (SAH) each bind pyridoxal 5'-phosphate. Lysine 206 carries the N6-(pyridoxal phosphate)lysine modification. A pyridoxal 5'-phosphate-binding site is contributed by threonine 241. Cysteine 328 serves as the catalytic Cysteine persulfide intermediate. Cysteine 328 contributes to the [2Fe-2S] cluster binding site.

This sequence belongs to the class-V pyridoxal-phosphate-dependent aminotransferase family. NifS/IscS subfamily. Homodimer. Forms a heterotetramer with IscU, interacts with other sulfur acceptors. Requires pyridoxal 5'-phosphate as cofactor.

The protein localises to the cytoplasm. It catalyses the reaction (sulfur carrier)-H + L-cysteine = (sulfur carrier)-SH + L-alanine. The protein operates within cofactor biosynthesis; iron-sulfur cluster biosynthesis. In terms of biological role, master enzyme that delivers sulfur to a number of partners involved in Fe-S cluster assembly, tRNA modification or cofactor biosynthesis. Catalyzes the removal of elemental sulfur atoms from cysteine to produce alanine. Functions as a sulfur delivery protein for Fe-S cluster synthesis onto IscU, an Fe-S scaffold assembly protein, as well as other S acceptor proteins. This chain is Cysteine desulfurase IscS, found in Helicobacter pylori (strain Shi470).